Here is a 198-residue protein sequence, read N- to C-terminus: HTH-type transcriptional regulator BetI (198 aa).

Residues 8–68 enclose the HTH tetR-type domain; sequence PLRRRELIDA…ATMRHLLREL (61 aa). The H-T-H motif DNA-binding region spans 31-50; sequence TVAQIAHEAGVSPALAHHYF.

Its pathway is amine and polyamine biosynthesis; betaine biosynthesis via choline pathway [regulation]. Repressor involved in the biosynthesis of the osmoprotectant glycine betaine. It represses transcription of the choline transporter BetT and the genes of BetAB involved in the synthesis of glycine betaine. The sequence is that of HTH-type transcriptional regulator BetI from Brucella abortus (strain 2308).